Here is a 379-residue protein sequence, read N- to C-terminus: Chaperone protein DnaJ (379 aa).

The J domain occupies 5–69 (DYYEVLGISK…NKRASYDQFG (65 aa)). The CR-type zinc-finger motif lies at 136 to 218 (GTTKEISIRK…CHGKGTENKT (83 aa)). Zn(2+)-binding residues include cysteine 149, cysteine 152, cysteine 166, cysteine 169, cysteine 192, cysteine 195, cysteine 206, and cysteine 209. CXXCXGXG motif repeat units lie at residues 149–156 (CETCHGDG), 166–173 (CSYCNGAG), 192–199 (CPKCNGSG), and 206–213 (CPTCHGKG).

The protein belongs to the DnaJ family. In terms of assembly, homodimer. Requires Zn(2+) as cofactor.

The protein localises to the cytoplasm. Participates actively in the response to hyperosmotic and heat shock by preventing the aggregation of stress-denatured proteins and by disaggregating proteins, also in an autonomous, DnaK-independent fashion. Unfolded proteins bind initially to DnaJ; upon interaction with the DnaJ-bound protein, DnaK hydrolyzes its bound ATP, resulting in the formation of a stable complex. GrpE releases ADP from DnaK; ATP binding to DnaK triggers the release of the substrate protein, thus completing the reaction cycle. Several rounds of ATP-dependent interactions between DnaJ, DnaK and GrpE are required for fully efficient folding. Also involved, together with DnaK and GrpE, in the DNA replication of plasmids through activation of initiation proteins. In Staphylococcus aureus (strain USA300 / TCH1516), this protein is Chaperone protein DnaJ.